Consider the following 405-residue polypeptide: Metallophosphoesterase 1 (405 aa).

Residues 31–51 (IFGSILLVFFFCEFLVYYLVI) form a helical membrane-spanning segment. A divalent metal cation-binding residues include aspartate 78, aspartate 120, asparagine 158, histidine 261, histidine 315, and histidine 317. Residues 369-389 (IIYIYCTASVLLTGYVLACLW) traverse the membrane as a helical segment.

This sequence belongs to the metallophosphoesterase superfamily. MPPE1 family. The cofactor is Mn(2+).

It is found in the endoplasmic reticulum-Golgi intermediate compartment membrane. Functionally, metallophosphoesterase that catalyzes the removal of a side-chain ethanolamine-phosphate (EtNP) from the second mannose of the GPI-anchor protein intermediate. Participates in the glycan remodeling steps of GPI-anchor maturation to allow an efficient transport of GPI-anchor proteins from the endoplasmic reticulum to the Golgi. This Xenopus laevis (African clawed frog) protein is Metallophosphoesterase 1.